The chain runs to 339 residues: tRNA dimethylallyltransferase (339 aa).

ATP is bound at residue 36–43; it reads GPTGSGKT. Residue 38-43 participates in substrate binding; it reads TGSGKT. Residues 61-64 are interaction with substrate tRNA; that stretch reads DSMQ.

The protein belongs to the IPP transferase family. In terms of assembly, monomer. Requires Mg(2+) as cofactor.

It catalyses the reaction adenosine(37) in tRNA + dimethylallyl diphosphate = N(6)-dimethylallyladenosine(37) in tRNA + diphosphate. Its function is as follows. Catalyzes the transfer of a dimethylallyl group onto the adenine at position 37 in tRNAs that read codons beginning with uridine, leading to the formation of N6-(dimethylallyl)adenosine (i(6)A). The polypeptide is tRNA dimethylallyltransferase (Chlamydia trachomatis serovar L2 (strain ATCC VR-902B / DSM 19102 / 434/Bu)).